The following is a 352-amino-acid chain: Glycerol-3-phosphate dehydrogenase [NAD(P)+] (352 aa).

NADPH is bound by residues Ser-11, Trp-12, Arg-32, and Lys-105. Sn-glycerol 3-phosphate contacts are provided by Lys-105, Gly-133, and Ser-135. Ala-137 is a binding site for NADPH. Sn-glycerol 3-phosphate is bound by residues Lys-188, Asp-241, Ser-251, Arg-252, and Asn-253. Lys-188 (proton acceptor) is an active-site residue. NADPH is bound at residue Arg-252. NADPH-binding residues include Val-276 and Glu-278.

Belongs to the NAD-dependent glycerol-3-phosphate dehydrogenase family.

The protein localises to the cytoplasm. It carries out the reaction sn-glycerol 3-phosphate + NAD(+) = dihydroxyacetone phosphate + NADH + H(+). The catalysed reaction is sn-glycerol 3-phosphate + NADP(+) = dihydroxyacetone phosphate + NADPH + H(+). Its pathway is membrane lipid metabolism; glycerophospholipid metabolism. In terms of biological role, catalyzes the reduction of the glycolytic intermediate dihydroxyacetone phosphate (DHAP) to sn-glycerol 3-phosphate (G3P), the key precursor for phospholipid synthesis. In Desulfitobacterium hafniense (strain Y51), this protein is Glycerol-3-phosphate dehydrogenase [NAD(P)+].